The sequence spans 624 residues: MAAHRWAVWAVLLLRLLVPAARVLANMEGDALHSLRTNLVDPNNVLQSWDPTLVNPCTWFHVTCNNDNSVIRVDLGNAALSGTLVPQLGQLKNLQYLELYSNNISGTIPSELGNLTNLVSLDLYLNNFTGPIPDSLGNLLKLRFLRLNNNSLSGSIPKSLTAITALQVLDLSNNNLSGEVPSTGSFSLFTPISFANNPSLCGPGTTKPCPGAPPFSPPPPYNPPTPVQSPGSSSSTGAIAGGVAAGAALLFAIPAIGFAWYRRRKPQEHFFDVPAEEDPEVHLGQLKRFSLRELQVATDTFSNKNILGRGGFGKVYKGRLADGSLVAVKRLKEERTPGGELQFQTEVEMISMAVHRNLLRLRGFCMTPTERLLVYPYMANGSVASRLRERPPSEPPLDWRTRRRIALGSARGLSYLHDHCDPKIIHRDVKAANILLDEDFEAVVGDFGLAKLMDYKDTHVTTAVRGTIGHIAPEYLSTGKSSEKTDVFGYGIMLLELITGQRAFDLARLANDDDVMLLDWVKGLLKEKRLEMLVDPDLQSNYIDVEVESLIQVALLCTQGSPTERPKMAEVVRMLEGDGLAERWEEWQKIEVVRQEVELGPHRNSEWIVDSTDNLHAVELSGPR.

The N-terminal stretch at 1–25 (MAAHRWAVWAVLLLRLLVPAARVLA) is a signal peptide. Topologically, residues 26–237 (NMEGDALHSL…QSPGSSSSTG (212 aa)) are extracellular. LRR repeat units lie at residues 91–115 (LKNL…LGNL), 117–139 (NLVS…LGNL), 140–163 (LKLR…LTAI), and 164–188 (TALQ…SFSL). 5 N-linked (GlcNAc...) asparagine glycosylation sites follow: N103, N114, N127, N149, and N175. The tract at residues 205–236 (TTKPCPGAPPFSPPPPYNPPTPVQSPGSSSST) is disordered. The segment covering 210-227 (PGAPPFSPPPPYNPPTPV) has biased composition (pro residues). Residues 238-258 (AIAGGVAAGAALLFAIPAIGF) traverse the membrane as a helical segment. The Cytoplasmic portion of the chain corresponds to 259 to 624 (AWYRRRKPQE…LHAVELSGPR (366 aa)). The 288-residue stretch at 301–588 (FSNKNILGRG…GLAERWEEWQ (288 aa)) folds into the Protein kinase domain. Residues 307 to 315 (LGRGGFGKV) and K329 each bind ATP. Catalysis depends on D428, which acts as the Proton acceptor.

It belongs to the protein kinase superfamily. Ser/Thr protein kinase family. As to quaternary structure, forms homodimers. Interacts with BRI1. Interacts with REM4.1. Expressed in developing lateral roots, shoot apex, leaf blades, lamina joints and flowers. Expressed at low levels in leaf sheaths and panicles.

It is found in the cell membrane. The catalysed reaction is L-seryl-[protein] + ATP = O-phospho-L-seryl-[protein] + ADP + H(+). It carries out the reaction L-threonyl-[protein] + ATP = O-phospho-L-threonyl-[protein] + ADP + H(+). Functionally, LRR receptor kinase involved in defense response. Does not seem to be required specifically for XA21-mediated immunity or basal resistance to Xanthomonas oryzae pv. oryzae (Xoo), or immunity to Magnaporthe oryzae. Involved in brassinosteroid (BR) signaling pathway. Acts as a coreceptor of BRI1. Forms at the plasma membrane a receptor complex with BRI1 which is activated in response to brassinolide. Phosphorylates BRI1. Required for normal plant growth and leaf development. Possesses kinase activity in vitro. This chain is LRR receptor kinase BAK1, found in Oryza sativa subsp. japonica (Rice).